We begin with the raw amino-acid sequence, 478 residues long: 2-(3-amino-3-carboxypropyl)histidine synthase subunit 2 (478 aa).

Residues Cys-93, Cys-114, and Cys-331 each coordinate [4Fe-4S] cluster.

Belongs to the DPH1/DPH2 family. DPH2 subfamily. In terms of assembly, component of the 2-(3-amino-3-carboxypropyl)histidine synthase complex composed of dph1, dph2, dph3 and a NADH-dependent reductase. [4Fe-4S] cluster serves as cofactor.

It functions in the pathway protein modification; peptidyl-diphthamide biosynthesis. Required for the first step of diphthamide biosynthesis, a post-translational modification of histidine which occurs in elongation factor 2. Dph1 and dph2 transfer a 3-amino-3-carboxypropyl (ACP) group from S-adenosyl-L-methionine (SAM) to a histidine residue, the reaction is assisted by a reduction system comprising dph3 and a NADH-dependent reductase. Facilitates the reduction of the catalytic iron-sulfur cluster found in the dph1 subunit. The sequence is that of 2-(3-amino-3-carboxypropyl)histidine synthase subunit 2 (dph2) from Xenopus laevis (African clawed frog).